A 448-amino-acid chain; its full sequence is Nucleoprotein (448 aa).

The interval 1-55 (MSFTPGKQSSSRASSGNRSGNGILKWADQSDQSRNVQTRGRRAQPKQTATSQQPS) is disordered. Positions 9–22 (SSSRASSGNRSGNG) are enriched in low complexity. Composition is skewed to polar residues over residues 29–38 (QSDQSRNVQT) and 45–55 (PKQTATSQQPS). Positions 52 to 194 (QQPSGGNVVP…GYYIEGSGRS (143 aa)) are RNA-binding. One can recognise a CoV N NTD domain in the interval 61-190 (PYYSWFSGIT…VLPQGYYIEG (130 aa)). RNA-binding residues include Arg-106, Arg-122, and Arg-164. A disordered region spans residues 157–231 (TPADILDRDP…RTPTSGVTPD (75 aa)). Ser-167 carries the phosphoserine; by host modification. Residue Thr-174 is modified to Phosphothreonine; by host. Position 191 is a phosphoserine; by host (Ser-191). Low complexity predominate over residues 193-223 (RSAPNSRSTSRASSRASSAGSRSRANSGNRT). The region spanning 259 to 384 (AKEIRQKILN…ENLNAYQQQD (126 aa)) is the CoV N CTD domain. The dimerization stretch occupies residues 266–384 (ILNKPRQKRS…ENLNAYQQQD (119 aa)). The segment at 385–448 (GMMNMSPKPQ…EPYTEDTSEI (64 aa)) is disordered. At Ser-390 the chain carries Phosphoserine; by host. Residues 399–409 (QKNGQGENDNI) show a composition bias toward polar residues. Over residues 422-439 (KSRELTAEDISLLKKMDE) the composition is skewed to basic and acidic residues. Ser-423 bears the Phosphoserine; by host mark. Phosphothreonine; by host is present on Thr-427.

This sequence belongs to the betacoronavirus nucleocapsid protein family. In terms of assembly, homooligomer. Both monomeric and oligomeric forms interact with RNA. Interacts with protein M. Interacts with NSP3; this interaction serves to tether the genome to the newly translated replicase-transcriptase complex at a very early stage of infection. In terms of processing, ADP-ribosylated. The ADP-ribosylation is retained in the virion during infection. Post-translationally, phosphorylated on serine and threonine residues.

Its subcellular location is the virion. It is found in the host endoplasmic reticulum-Golgi intermediate compartment. The protein resides in the host Golgi apparatus. Its function is as follows. Packages the positive strand viral genome RNA into a helical ribonucleocapsid (RNP) and plays a fundamental role during virion assembly through its interactions with the viral genome and membrane protein M. Plays an important role in enhancing the efficiency of subgenomic viral RNA transcription as well as viral replication. This Bovine coronavirus (strain F15) (BCoV) protein is Nucleoprotein.